Reading from the N-terminus, the 573-residue chain is MTSQGPLYIGFDLSTQQLKGLVVNSELKVVHISKFDFDADSHGFSIKKGVLTNEAEHEVFAPVALWLQALDGVLNGLRKQGLDFSRVKGISGAGQQHGSVYWGENAESLLKSLDSSKSLEEQLSGAFSHPFSPNWQDASTQKECDEFDAFLGGPEQLAEATGSKAHHRFTGPQILRMQRKYPEVYKKTARISLVSSFLASLLLGHIAPMDISDVCGMNLWDIKKGAYNEKLLGLCAGPFGVEDLKRKLGAVPEDGGLRLGKINRYFVERYGFSSDCEILPSTGDNPATILALPLRPSDAMVSLGTSTTFLMSTPNYKPDPATHFFNHPTTPGLYMFMLCYKNGGLAREHVRDAINEKSGSGASQSWESFDKIMLETPPMGQKTESGPMKMGLFFPRPEIVPNVRSGQWRFTYDPASDALTETEDGWNTPSDEARAIVESQMLSLRLRSRGLTQSPGDGLPPQPRRVYLVGGGSKNKAIAKVAGEILGGSDGVYKLDVGDNACALGAAYKAVWAIERKPGQTFEDLIGQRWREEEFIEKIADGYQKGVFEKYGKAVEGFEKMEQQVLKQEAARK.

Substrate-binding residues include histidine 97, arginine 168, aspartate 284, and asparagine 285. ATP is bound by residues tryptophan 366, 471 to 472 (GG), and asparagine 475.

This sequence belongs to the FGGY kinase family.

The protein localises to the cytoplasm. It catalyses the reaction D-xylulose + ATP = D-xylulose 5-phosphate + ADP + H(+). In terms of biological role, highly specific D-xylulose kinase which participates in the catabolism of xylose. Xylose is a major component of hemicelluloses such as xylan. Most fungi utilize D-xylose via three enzymatic reactions, xylose reductase (XR), xylitol dehydrogenase (XDH), and xylulokinase, to form xylulose 5-phosphate, which enters pentose phosphate pathway. The polypeptide is Probable D-xylulose kinase A (xkiA) (Aspergillus fumigatus (strain ATCC MYA-4609 / CBS 101355 / FGSC A1100 / Af293) (Neosartorya fumigata)).